The primary structure comprises 249 residues: O-methyltransferase adaD (249 aa).

The segment covering 1–15 has biased composition (low complexity); the sequence is MSSVTLTTTTTTTST. The segment at 1–26 is disordered; sequence MSSVTLTTTTTTTSTPPKPTPKDEPQ.

Belongs to the methyltransferase superfamily.

It catalyses the reaction 2-acetyl-3,4a,8,10,11,12a-hexahydroxy-1,4,4a,5,12,12a-hexahydrotetracene-1,12-dione + S-adenosyl-L-methionine = TAN-1612 + S-adenosyl-L-homocysteine + H(+). It functions in the pathway secondary metabolite biosynthesis. Its function is as follows. O-methyltransferase; part of the gene cluster that mediates the biosynthesis of the linear tetracyclic TAN-1612 neuropeptide Y receptor antagonist. The decaketide backbone of TAN-1612 is synthesized by the non-reducing polyketide synthase adaA via condensation of one acetyl-CoA starter unit with 9 malonyl-CoA units. The FAD-dependent monooxygenase adaC then performs hydroxylation at C2 while the polaketide chain is still attached to the NRPKS adaA. The alpha-hydroxylation step at C2 appears to be crucial for the following C18-C1 Claisen cyclization and release of the C9-hydroxyl version of TAN-1612 from the NRPKS adaA, two steps performed by the lactamase-like protein adaB. Finally, the O-methyltransferase adaD performs the C9 O-methylation to complete the biosynthesis of TAN-1612. The sequence is that of O-methyltransferase adaD from Aspergillus niger.